The following is a 903-amino-acid chain: Cell division cycle protein 48 homolog MJ1156 (903 aa).

ATP is bound by residues 220–227 (GPPGTGKT) and 493–500 (GPPGTGKT).

The protein belongs to the AAA ATPase family. CDC48 subfamily.

This chain is Cell division cycle protein 48 homolog MJ1156, found in Methanocaldococcus jannaschii (strain ATCC 43067 / DSM 2661 / JAL-1 / JCM 10045 / NBRC 100440) (Methanococcus jannaschii).